The primary structure comprises 229 residues: Cytochrome c oxidase subunit 2 (229 aa).

Residues 1 to 26 lie on the Mitochondrial intermembrane side of the membrane; sequence MANWTQLGLQDASSPLMEELIYFHDY. Residues 27-48 form a helical membrane-spanning segment; that stretch reads TLIILTLITILVFYGLASLIVS. Residues 49-62 lie on the Mitochondrial matrix side of the membrane; sequence SNTNRFFLEGQSLE. Residues 63–82 traverse the membrane as a helical segment; the sequence is TIWTVIPAVILIFIALPSLQ. Topologically, residues 83 to 229 are mitochondrial intermembrane; that stretch reads LLYLIDEVNN…ENWVSNFLNE (147 aa). His-161, Cys-196, Glu-198, Cys-200, His-204, and Met-207 together coordinate Cu cation. Glu-198 contributes to the Mg(2+) binding site.

It belongs to the cytochrome c oxidase subunit 2 family. As to quaternary structure, component of the cytochrome c oxidase (complex IV, CIV), a multisubunit enzyme composed of a catalytic core of 3 subunits and several supernumerary subunits. The complex exists as a monomer or a dimer and forms supercomplexes (SCs) in the inner mitochondrial membrane with ubiquinol-cytochrome c oxidoreductase (cytochrome b-c1 complex, complex III, CIII). It depends on Cu cation as a cofactor.

The protein resides in the mitochondrion inner membrane. The enzyme catalyses 4 Fe(II)-[cytochrome c] + O2 + 8 H(+)(in) = 4 Fe(III)-[cytochrome c] + 2 H2O + 4 H(+)(out). Functionally, component of the cytochrome c oxidase, the last enzyme in the mitochondrial electron transport chain which drives oxidative phosphorylation. The respiratory chain contains 3 multisubunit complexes succinate dehydrogenase (complex II, CII), ubiquinol-cytochrome c oxidoreductase (cytochrome b-c1 complex, complex III, CIII) and cytochrome c oxidase (complex IV, CIV), that cooperate to transfer electrons derived from NADH and succinate to molecular oxygen, creating an electrochemical gradient over the inner membrane that drives transmembrane transport and the ATP synthase. Cytochrome c oxidase is the component of the respiratory chain that catalyzes the reduction of oxygen to water. Electrons originating from reduced cytochrome c in the intermembrane space (IMS) are transferred via the dinuclear copper A center (CU(A)) of subunit 2 and heme A of subunit 1 to the active site in subunit 1, a binuclear center (BNC) formed by heme A3 and copper B (CU(B)). The BNC reduces molecular oxygen to 2 water molecules using 4 electrons from cytochrome c in the IMS and 4 protons from the mitochondrial matrix. The sequence is that of Cytochrome c oxidase subunit 2 (COII) from Pisaster ochraceus (Ochre sea star).